A 356-amino-acid chain; its full sequence is Carminomycin 4-O-methyltransferase DauK (356 aa).

An S-adenosyl-L-methionine-binding site is contributed by arginine 153. A substrate-binding site is contributed by aspartate 163. Residues glycine 187, glutamate 210, 237 to 238 (DF), and serine 252 each bind S-adenosyl-L-methionine. Positions 257 and 303 each coordinate substrate.

The protein belongs to the class I-like SAM-binding methyltransferase superfamily. Cation-independent O-methyltransferase family. Homodimer and homotetramer in equilibrium.

It catalyses the reaction carminomycin + S-adenosyl-L-methionine = daunorubicin + S-adenosyl-L-homocysteine + H(+). Its pathway is antibiotic biosynthesis; daunorubicin biosynthesis. It participates in antibiotic biosynthesis; carminomycin biosynthesis. With respect to regulation, strongly inhibited by S-adenosyl-L-homocysteine and weakly by adenine and methionine. Functionally, involved in the biosynthesis of the anthracyclines carminomycin and daunorubicin (daunomycin) which are aromatic polyketide antibiotics that exhibit high cytotoxicity and are widely applied in the chemotherapy of a variety of cancers. In vivo, catalyzes the transfer of a methyl group from S-adenosyl-L-methionine to the 4-O-position of carminomycin to form daunorubicin. In vitro, it also methylates the anthracyclines rhodomycin D (10-carbomethoxy-13-deoxycarminomycin), 10-carboxy-13-deoxycarminomycin, 13-deoxy-carminomycin and 13-dihydrocarminomycin at the 4-hydroxyl position. The chain is Carminomycin 4-O-methyltransferase DauK (dauK) from Streptomyces sp. (strain C5).